The chain runs to 509 residues: Solute carrier family 2, facilitated glucose transporter member 4 (509 aa).

Residues 1 to 24 (MPSGFQQIGSEDGEPPRQRVTGTL) lie on the Cytoplasmic side of the membrane. Positions 7-13 (QIGSEDG) are interaction with SRFBP1. Serine 10 carries the phosphoserine modification. Residues 25–45 (VLAVFSAVLGSLQFGYNIGVI) traverse the membrane as a helical segment. The Extracellular portion of the chain corresponds to 46-81 (NAPQKVIEQSYNETWLGRQGPEGPGSIPPGTLTTLW). N-linked (GlcNAc...) asparagine glycosylation occurs at asparagine 57. The chain crosses the membrane as a helical span at residues 82 to 102 (ALSVAIFSVGGMISSFLIGII). Over 103-111 (SQWLGRKRA) the chain is Cytoplasmic. The helical transmembrane segment at 112 to 132 (MLFNNALAVLGGTLMGLAKAA) threads the bilayer. Topologically, residues 133–142 (ASYEMLILGR) are extracellular. The chain crosses the membrane as a helical span at residues 143–163 (FFIGAYSGLTSGLVPMYVGEI). Residues 164–171 (APTHLRGA) lie on the Cytoplasmic side of the membrane. The chain crosses the membrane as a helical span at residues 172–192 (LGTLNQLAIVTGILIAQVLGL). Glutamine 177 contributes to the D-glucose binding site. Over 193–200 (ESMLGTAT) the chain is Extracellular. A helical transmembrane segment spans residues 201 to 221 (LWPLLLGITVLPALLQMVLLP). Over 222–287 (LCPESPRYLY…LLGSHTHRQP (66 aa)) the chain is Cytoplasmic. Cysteine 223 is lipidated: S-palmitoyl cysteine. Serine 274 carries the post-translational modification Phosphoserine; by SGK1. The helical transmembrane segment at 288–308 (LVIAIVLQLSQQLSGINAVFY) threads the bilayer. Residues 298-299 (QQ) and asparagine 304 each bind D-glucose. Topologically, residues 309 to 323 (YSTSIFESAGVEKPA) are extracellular. The helical transmembrane segment at 324–344 (YATIGAGVVNTVFTLVSVFLV) threads the bilayer. Asparagine 333 is a binding site for D-glucose. Residues 345–353 (ERAGRRTLH) are Cytoplasmic-facing. Residues 354 to 374 (LLGLAGMCGCAILMTVALLLL) form a helical membrane-spanning segment. Residues 375–384 (ERVPAMSYVS) are Extracellular-facing. Residues 385–405 (IVAIFGFVAFFEIGPGPIPWF) form a helical membrane-spanning segment. D-glucose is bound by residues glutamate 396 and tryptophan 404. At 406 to 417 (IVAELFSQGPRP) the chain is on the cytoplasmic side. A helical membrane pass occupies residues 418-438 (AAMAVAGFSNWTCNFIIGMGF). The Extracellular portion of the chain corresponds to 439 to 445 (QYVADAM). Residues 446-466 (GPYVFLLFAVLLLGFFIFTFL) form a helical membrane-spanning segment. Residues 467-509 (KVPETRGRTFDQISAVFHRTPSLLEQEVKPSTELEYLGPDEHD) are Cytoplasmic-facing. At threonine 486 the chain carries Phosphothreonine. Serine 488 is modified (phosphoserine). Residues 489-490 (LL) carry the Dileucine internalization motif motif.

This sequence belongs to the major facilitator superfamily. Sugar transporter (TC 2.A.1.1) family. Glucose transporter subfamily. In terms of assembly, binds to DAXX. Interacts via its N-terminus with SRFBP1. Interacts with NDUFA9. Interacts with TRARG1; the interaction is required for proper SLC2A4 recycling after insulin stimulation. Post-translationally, sumoylated. Palmitoylated. Palmitoylation by ZDHHC7 controls the insulin-dependent translocation of GLUT4 to the plasma membrane.

It localises to the cell membrane. It is found in the endomembrane system. The protein localises to the cytoplasm. Its subcellular location is the perinuclear region. It catalyses the reaction D-glucose(out) = D-glucose(in). Its function is as follows. Insulin-regulated facilitative glucose transporter, which plays a key role in removal of glucose from circulation. Response to insulin is regulated by its intracellular localization: in the absence of insulin, it is efficiently retained intracellularly within storage compartments in muscle and fat cells. Upon insulin stimulation, translocates from these compartments to the cell surface where it transports glucose from the extracellular milieu into the cell. The chain is Solute carrier family 2, facilitated glucose transporter member 4 from Bos taurus (Bovine).